A 670-amino-acid polypeptide reads, in one-letter code: DNA ligase (670 aa).

Residues 33 to 37, 82 to 83, and Glu-114 each bind NAD(+); these read DAEYD and SL. The N6-AMP-lysine intermediate role is filled by Lys-116. NAD(+)-binding residues include Arg-137, Glu-174, Lys-291, and Lys-315. Zn(2+)-binding residues include Cys-409, Cys-412, Cys-427, and Cys-433. The BRCT domain occupies 593 to 670; sequence GAELPLEGKT…TEQDLLELIN (78 aa).

The protein belongs to the NAD-dependent DNA ligase family. LigA subfamily. It depends on Mg(2+) as a cofactor. Mn(2+) serves as cofactor.

The catalysed reaction is NAD(+) + (deoxyribonucleotide)n-3'-hydroxyl + 5'-phospho-(deoxyribonucleotide)m = (deoxyribonucleotide)n+m + AMP + beta-nicotinamide D-nucleotide.. Functionally, DNA ligase that catalyzes the formation of phosphodiester linkages between 5'-phosphoryl and 3'-hydroxyl groups in double-stranded DNA using NAD as a coenzyme and as the energy source for the reaction. It is essential for DNA replication and repair of damaged DNA. The polypeptide is DNA ligase (Vibrio parahaemolyticus serotype O3:K6 (strain RIMD 2210633)).